The primary structure comprises 171 residues: MEIILIKPVRKLGKIGDMLKVADGFGRNYLLPQKLAIRATEPNKELIVKQKHEFEAKDKQIREEVEKINALIKDQKLVFIRQASDDGKLFGSVTNKEIADKLSKNVSYNISHSNIILDKQIKSTGVYTVEIRLHAELNDIVTVIVARSESEAQDYLREKKTETSEDLAESA.

It belongs to the bacterial ribosomal protein bL9 family.

Binds to the 23S rRNA. The chain is Large ribosomal subunit protein bL9 from Rickettsia akari (strain Hartford).